The following is a 597-amino-acid chain: U3 small nucleolar RNA-associated protein 6 homolog (597 aa).

5 HAT repeats span residues 121–153 (ATKT…WEME), 156–188 (LSSE…MELM), 304–335 (RKEE…FCLE), 488–520 (GGYK…FEKE), and 524–557 (CNMA…EELN).

It belongs to the UTP6 family. In terms of assembly, part of the small subunit (SSU) processome, composed of more than 70 proteins and the RNA chaperone small nucleolar RNA (snoRNA) U3.

The protein resides in the nucleus. Its subcellular location is the nucleolus. Part of the small subunit (SSU) processome, first precursor of the small eukaryotic ribosomal subunit. During the assembly of the SSU processome in the nucleolus, many ribosome biogenesis factors, an RNA chaperone and ribosomal proteins associate with the nascent pre-rRNA and work in concert to generate RNA folding, modifications, rearrangements and cleavage as well as targeted degradation of pre-ribosomal RNA by the RNA exosome. Involved in nucleolar processing of pre-18S ribosomal RNA. The chain is U3 small nucleolar RNA-associated protein 6 homolog from Homo sapiens (Human).